A 72-amino-acid chain; its full sequence is DNA-directed RNA polymerase subunit omega (72 aa).

Belongs to the RNA polymerase subunit omega family. The RNAP catalytic core consists of 2 alpha, 1 beta, 1 beta' and 1 omega subunit. When a sigma factor is associated with the core the holoenzyme is formed, which can initiate transcription.

The enzyme catalyses RNA(n) + a ribonucleoside 5'-triphosphate = RNA(n+1) + diphosphate. Its function is as follows. Promotes RNA polymerase assembly. Latches the N- and C-terminal regions of the beta' subunit thereby facilitating its interaction with the beta and alpha subunits. This Clostridium kluyveri (strain NBRC 12016) protein is DNA-directed RNA polymerase subunit omega.